A 229-amino-acid polypeptide reads, in one-letter code: Glutathione S-transferase 1 (229 aa).

One can recognise a GST N-terminal domain in the interval 2-83 (SPVKVFGHPM…YILRKYGGTA (82 aa)). Residues 41–42 (HK), 54–55 (KM), and 67–68 (ES) contribute to the glutathione site. Positions 93–223 (GIEELAMVDV…RVCKHMPTEF (131 aa)) constitute a GST C-terminal domain.

The protein belongs to the GST superfamily. Phi family.

It catalyses the reaction RX + glutathione = an S-substituted glutathione + a halide anion + H(+). Its function is as follows. Conjugation of reduced glutathione to a wide number of exogenous and endogenous hydrophobic electrophiles. The sequence is that of Glutathione S-transferase 1 (GSTA1) from Triticum aestivum (Wheat).